Here is a 146-residue protein sequence, read N- to C-terminus: Snaclec mucetin subunit beta (146 aa).

An N-terminal signal peptide occupies residues Met-1 to Ala-23. 3 disulfides stabilise this stretch: Cys-27–Cys-38, Cys-55–Cys-144, and Cys-121–Cys-136. The region spanning Tyr-34–Lys-145 is the C-type lectin domain.

This sequence belongs to the snaclec family. Dimer and tetramer of heterodimers of alpha and beta subunits ((alphabeta)(2) and (alphabeta)(4)); disulfide-linked. These two multimeric forms are found. In terms of processing, the complex is glycosylated. In terms of tissue distribution, expressed by the venom gland.

Its subcellular location is the secreted. In terms of biological role, potent platelet activator that acts via GPIb (GP1BA/GP1BB). After activation by the toxin, the receptor is redistributed on platelet surface thanks to cytoskeletal translocation. The indirect activation of integrin alpha-IIb/beta-3 (ITGA2B/ITGB3) also induced by the toxin is downstream the cytoskeletal translocation of GPIb. The chain is Snaclec mucetin subunit beta from Protobothrops mucrosquamatus (Taiwan habu).